A 693-amino-acid polypeptide reads, in one-letter code: MSGETEIDDPEVSDGASENDYSDHEQELDVIGKEGDNQEMAEQKVRPDGEENGNTVGATATVTKPKFDPKDPLRPRRKKARRACFACQRAHLTCGDERPCQRCIKRGLADACQDGVRKKAKYLHDAPPEALRPVLGPTYNQQVSSNRATAASTPTEPSPGMGNFFSQPDTSPSYPLFGANQQGQMPPPLQNRLSFGSNQPSPISPTFHTAGNRPAGMQGISLPQVSNDSHSAFGGGAFFDPSNPALFNFDLEGLNFGNHYGALEFGMLGHMASGSAETPPQDSSAGMPQNVGDLGFSNNSAFTNNPPFNQIYSHDSLPDFAVGLDRPNGGNVFGNNNPHHGLPHAYAIATSGSQHSPSTDASPAASTMGFESSPTTTNYPAPASHRPAKRQDTKSGPSGKLGPSGILGKRNRDPSSIYDTVHEPYSYTTGFHSLTAFIQKRFSPNKTLRIAKSLASIRPSFISCTKTLNRQDLIFMEKCFQRTLFEYEDFMLNCCTPTVVCRRTGEIAAANKEFTLLTGWRKEVLLGNEANLNTNTGSGGPPSSGSSGRGSFTTPRMRPVNLADSNPNGKTQPIFLAELLDDDSVIEFYEDFARLAFGDSRGSVTTRYKLLRYQTAKDTSQSPEGDKGKRKDIVGFNGAGIGGMGNRIKEIDANNGIESLQQDGKVDCSSCWTIKRDVFDIPMLIVMNFLPCI.

The segment covering 1-12 (MSGETEIDDPEV) has biased composition (acidic residues). A disordered region spans residues 1–75 (MSGETEIDDP…KFDPKDPLRP (75 aa)). A compositionally biased stretch (basic and acidic residues) spans 21–49 (YSDHEQELDVIGKEGDNQEMAEQKVRPDG). The span at 52–62 (NGNTVGATATV) shows a compositional bias: polar residues. A compositionally biased stretch (basic and acidic residues) spans 65–74 (PKFDPKDPLR). Positions 84–112 (CFACQRAHLTCGDERPCQRCIKRGLADAC) form a DNA-binding region, zn(2)-C6 fungal-type. Composition is skewed to polar residues over residues 144–155 (SSNRATAASTPT) and 275–287 (SAET…SAGM). 4 disordered regions span residues 144–170 (SSNR…QPDT), 273–299 (SGSA…FSNN), 350–413 (TSGS…RNRD), and 531–567 (NLNT…DSNP). Residues 356–367 (SPSTDASPAAST) show a composition bias toward low complexity. Residues 369–379 (GFESSPTTTNY) are compositionally biased toward polar residues. Residues 394–408 (KSGPSGKLGPSGILG) show a composition bias toward low complexity.

The protein belongs to the ERT1/acuK family.

The protein resides in the nucleus. Functionally, transcription factor which regulates nonfermentable carbon utilization. Activator of gluconeogenetic genes. This Botryotinia fuckeliana (strain B05.10) (Noble rot fungus) protein is Transcription activator of gluconeogenesis BC1G_14637.